We begin with the raw amino-acid sequence, 354 residues long: Uroporphyrinogen decarboxylase (354 aa).

Substrate-binding positions include arginine 25–arginine 29, phenylalanine 44, aspartate 75, tyrosine 152, threonine 207, and histidine 330.

The protein belongs to the uroporphyrinogen decarboxylase family. In terms of assembly, homodimer.

Its subcellular location is the cytoplasm. It catalyses the reaction uroporphyrinogen III + 4 H(+) = coproporphyrinogen III + 4 CO2. It participates in porphyrin-containing compound metabolism; protoporphyrin-IX biosynthesis; coproporphyrinogen-III from 5-aminolevulinate: step 4/4. Functionally, catalyzes the decarboxylation of four acetate groups of uroporphyrinogen-III to yield coproporphyrinogen-III. This is Uroporphyrinogen decarboxylase from Xylella fastidiosa (strain Temecula1 / ATCC 700964).